Consider the following 667-residue polypeptide: UvrABC system protein B (667 aa).

One can recognise a Helicase ATP-binding domain in the interval 25–414 (TGLQRGDKHQ…GVVVEQIIRP (390 aa)). 38-45 (GVTGSGKT) is an ATP binding site. The short motif at 91–114 (YYDYYQPEAYVPTTDTFIEKDSSI) is the Beta-hairpin element. In terms of domain architecture, Helicase C-terminal spans 430–596 (QVDDLIHEIR…TVKKSLRSIL (167 aa)). Residues 624-659 (KNEIARVKEEMLAAAANLEFEKAAELRDRMLELDKL) enclose the UVR domain.

This sequence belongs to the UvrB family. As to quaternary structure, forms a heterotetramer with UvrA during the search for lesions. Interacts with UvrC in an incision complex.

It localises to the cytoplasm. The UvrABC repair system catalyzes the recognition and processing of DNA lesions. A damage recognition complex composed of 2 UvrA and 2 UvrB subunits scans DNA for abnormalities. Upon binding of the UvrA(2)B(2) complex to a putative damaged site, the DNA wraps around one UvrB monomer. DNA wrap is dependent on ATP binding by UvrB and probably causes local melting of the DNA helix, facilitating insertion of UvrB beta-hairpin between the DNA strands. Then UvrB probes one DNA strand for the presence of a lesion. If a lesion is found the UvrA subunits dissociate and the UvrB-DNA preincision complex is formed. This complex is subsequently bound by UvrC and the second UvrB is released. If no lesion is found, the DNA wraps around the other UvrB subunit that will check the other stand for damage. The protein is UvrABC system protein B of Syntrophotalea carbinolica (strain DSM 2380 / NBRC 103641 / GraBd1) (Pelobacter carbinolicus).